Here is a 473-residue protein sequence, read N- to C-terminus: Cysteine--tRNA ligase (473 aa).

Residue Cys-30 participates in Zn(2+) binding. The 'HIGH' region motif lies at 32 to 42 (MTVYDYCHIGH). 3 residues coordinate Zn(2+): Cys-213, His-238, and Glu-242. Residues 270–274 (KMSKS) carry the 'KMSKS' region motif. Lys-273 contacts ATP.

This sequence belongs to the class-I aminoacyl-tRNA synthetase family. Monomer. Zn(2+) serves as cofactor.

It is found in the cytoplasm. The enzyme catalyses tRNA(Cys) + L-cysteine + ATP = L-cysteinyl-tRNA(Cys) + AMP + diphosphate. The protein is Cysteine--tRNA ligase of Acinetobacter baumannii (strain SDF).